Here is a 364-residue protein sequence, read N- to C-terminus: Fructose-bisphosphate aldolase B (364 aa).

Arg-56 and Lys-147 together coordinate substrate. Glu-188 serves as the catalytic Proton acceptor. Catalysis depends on Lys-230, which acts as the Schiff-base intermediate with dihydroxyacetone-P.

Belongs to the class I fructose-bisphosphate aldolase family. In terms of assembly, homotetramer.

It is found in the cytoplasm. Its subcellular location is the cytoskeleton. It localises to the microtubule organizing center. The protein localises to the centrosome. The protein resides in the centriolar satellite. It catalyses the reaction beta-D-fructose 1,6-bisphosphate = D-glyceraldehyde 3-phosphate + dihydroxyacetone phosphate. It participates in carbohydrate degradation; glycolysis; D-glyceraldehyde 3-phosphate and glycerone phosphate from D-glucose: step 4/4. The polypeptide is Fructose-bisphosphate aldolase B (aldob) (Sparus aurata (Gilthead sea bream)).